The sequence spans 306 residues: Cell division protein ZipA (306 aa).

Residues 1–6 (MENLQL) lie on the Periplasmic side of the membrane. A helical membrane pass occupies residues 7–27 (VLLLIGAIAIIAVLVHGFWSI). The Cytoplasmic portion of the chain corresponds to 28–306 (RKQQPKGYKQ…NYIQRIRAQA (279 aa)).

This sequence belongs to the ZipA family. In terms of assembly, interacts with FtsZ via their C-terminal domains.

The protein localises to the cell inner membrane. Essential cell division protein that stabilizes the FtsZ protofilaments by cross-linking them and that serves as a cytoplasmic membrane anchor for the Z ring. Also required for the recruitment to the septal ring of downstream cell division proteins. The protein is Cell division protein ZipA of Shewanella halifaxensis (strain HAW-EB4).